Here is a 172-residue protein sequence, read N- to C-terminus: Zinc finger protein 580 (172 aa).

Residues 1 to 92 are disordered; it reads MLLLPPRPPH…PGEPGPRKGY (92 aa). The span at 19-30 shows a compositional bias: pro residues; sequence MDPPPPKTPPFP. K31 participates in a covalent cross-link: Glycyl lysine isopeptide (Lys-Gly) (interchain with G-Cter in SUMO2). A C2H2-type 1 zinc finger spans residues 92-114; that stretch reads YSCPECARVFASPLRLQSHRVSH. Residue K118 forms a Glycyl lysine isopeptide (Lys-Gly) (interchain with G-Cter in SUMO2) linkage. 2 C2H2-type zinc fingers span residues 120–142 and 150–172; these read FTCG…RATH and HTCP…VRLH.

As to quaternary structure, interacts with SMAD2.

The protein resides in the nucleus. Involved in the regulation of endothelial cell proliferation and migration. Mediates H(2)O(2)-induced leukocyte chemotaxis by elevating interleukin-8 production and may play a role in inflammation. May be involved in transcriptional regulation. The protein is Zinc finger protein 580 (Znf580) of Mus musculus (Mouse).